The following is a 501-amino-acid chain: COP9 signalosome complex subunit 3 (501 aa).

Residues 275–445 (RFEDALFLLE…VFWTELSPVP (171 aa)) form the PCI domain.

It belongs to the CSN3 family. Component of the CSN complex, probably composed of csn-1, csn-2, csn-3, csn-4, csn-5, csn-6 and csn-7. Within the complex it probably interacts directly with csn-2 and csn-4. May interact with itself.

The protein localises to the cytoplasm. It is found in the nucleus. Functionally, component of the COP9 signalosome complex (CSN), a complex involved in various cellular and developmental processes. The CSN complex is an essential regulator of the ubiquitin (Ubl) conjugation pathway by mediating the deneddylation of the cullin subunits of the SCF-type E3 ligase complexes, leading to decrease the Ubl ligase activity of SCF. The CSN complex plays an essential role in embryogenesis and oogenesis and is required to regulate microtubule stability in the early embryo. Mediates mei-3/katanin targeting for degradation at the meiosis to mitosis transition via deneddylation of cul-3. The protein is COP9 signalosome complex subunit 3 (csn-3) of Caenorhabditis elegans.